Reading from the N-terminus, the 721-residue chain is Procollagen-lysine,2-oxoglutarate 5-dioxygenase (721 aa).

Residues 1–21 (MRIQQSALLLLLLAVTSQGDA) form the signal peptide. Residues Asn504, Asn530, and Asn536 are each glycosylated (N-linked (GlcNAc...) asparagine). The Fe2OG dioxygenase domain occupies 627–721 (NPPRALMNFM…RYIMISFIDP (95 aa)). Fe cation-binding residues include His650 and Asp652. N-linked (GlcNAc...) asparagine glycosylation is present at Asn680. His702 contributes to the Fe cation binding site. N-linked (GlcNAc...) asparagine glycosylation occurs at Asn709. Arg712 contributes to the 2-oxoglutarate binding site.

L-ascorbate serves as cofactor. Fe(2+) is required as a cofactor.

It is found in the endoplasmic reticulum. Its subcellular location is the secreted. It localises to the extracellular space. It catalyses the reaction L-lysyl-[collagen] + 2-oxoglutarate + O2 = (5R)-5-hydroxy-L-lysyl-[collagen] + succinate + CO2. In terms of biological role, forms hydroxylysine residues in collagen type IV. Required for the secretion of collagen type IV (vkg) from haemocytes, fat body and follicle cells. This Drosophila melanogaster (Fruit fly) protein is Procollagen-lysine,2-oxoglutarate 5-dioxygenase.